The chain runs to 1148 residues: Phospholipid-transporting ATPase IB (1148 aa).

Residues 1–54 (MSRATSVGDQLDVPARTIYLNQPHLNKFCDNQISTAKYSVVTFLPRFLYEQIRR) are Cytoplasmic-facing. Residue threonine 5 is modified to Phosphothreonine. A helical membrane pass occupies residues 55–75 (AANAFFLFIALLQQIPDVSPT). Residues 76 to 79 (GRYT) are Exoplasmic loop-facing. The helical transmembrane segment at 80–100 (TLVPLIIILTIAGIKEIVEDF) threads the bilayer. Residues 101–276 (KRHKADNAVN…SNVEKVTNVQ (176 aa)) are Cytoplasmic-facing. The helical transmembrane segment at 277–297 (ILVLFGILLVMALVSSVGALY) threads the bilayer. At 298 to 324 (WNGSQGGKNWYIKKMDATSDNFGYNLL) the chain is on the exoplasmic loop side. A helical transmembrane segment spans residues 325 to 345 (TFIILYNNLIPISLLVTLEVV). Residues 346 to 847 (KYTQALFINW…CILYCFYKNV (502 aa)) are Cytoplasmic-facing. Aspartate 388 functions as the 4-aspartylphosphate intermediate in the catalytic mechanism. Residues aspartate 388, lysine 389, threonine 390, glutamate 488, phenylalanine 529, lysine 552, arginine 585, threonine 665, glycine 666, aspartate 667, arginine 755, and lysine 761 each contribute to the ATP site. Mg(2+) is bound at residue aspartate 388. Threonine 390 contributes to the Mg(2+) binding site. Aspartate 781 provides a ligand contact to Mg(2+). ATP contacts are provided by asparagine 784 and aspartate 785. Aspartate 785 is a binding site for Mg(2+). Residues 848–868 (VLYIIELWFAFVNGFSGQILF) form a helical membrane-spanning segment. Topologically, residues 869–870 (ER) are exoplasmic loop. A helical membrane pass occupies residues 871–891 (WCIGLYNVIFTALPPFTLGIF). At 892–919 (ERSCSQESMLRFPQLYKITQNAEGFNTK) the chain is on the cytoplasmic side. A helical membrane pass occupies residues 920–940 (VFWGHCINALVHSLILFWFPM). Residues 941–957 (KALEHDTVLANGHATDY) are Exoplasmic loop-facing. Residues 958-978 (LFVGNIVYTYVVVTVCLKAGL) traverse the membrane as a helical segment. Residues 979–988 (ETTAWTKFSH) lie on the Cytoplasmic side of the membrane. A helical membrane pass occupies residues 989–1009 (LAVWGSMLIWLVFFGIYSTIW). Over 1010 to 1023 (PTIPIAPDMKGQAT) the chain is Exoplasmic loop. Residues 1024–1044 (MVLSSAHFWLGLFLVPTACLI) traverse the membrane as a helical segment. The Cytoplasmic portion of the chain corresponds to 1045–1148 (EDVAWRAAKH…DTTKQKSRKK (104 aa)). Residues 1102–1126 (PPTLFRGSSLQQSMPHGYAFSQEEH) are disordered.

Belongs to the cation transport ATPase (P-type) (TC 3.A.3) family. Type IV subfamily. Component of a P4-ATPase flippase complex which consists of a catalytic alpha subunit and an accessory beta subunit. Interacts with TMEM30A to form a flippase complex. The cofactor is Mg(2+). As to expression, expressed in retinal photoreceptor cells and testis.

The protein localises to the membrane. It is found in the golgi apparatus membrane. The protein resides in the endosome membrane. Its subcellular location is the cell membrane. It localises to the photoreceptor outer segment membrane. The protein localises to the photoreceptor inner segment membrane. It catalyses the reaction ATP + H2O + phospholipidSide 1 = ADP + phosphate + phospholipidSide 2.. The enzyme catalyses a 1,2-diacyl-sn-glycero-3-phospho-L-serine(out) + ATP + H2O = a 1,2-diacyl-sn-glycero-3-phospho-L-serine(in) + ADP + phosphate + H(+). The catalysed reaction is a 1,2-diacyl-sn-glycero-3-phosphoethanolamine(in) + ATP + H2O = a 1,2-diacyl-sn-glycero-3-phosphoethanolamine(out) + ADP + phosphate + H(+). Its activity is regulated as follows. ATPase activity is stimulated by phosphatidylserine (PS) and minimally by phosphatidylethanolamine (PE). ATPase activity is inhibited by N-ethylmaleimide (NEM) and vanadate. Flippase activity is inhibited by NEM and 1,2-dioleoyl-sn-glycero-3-phospho-L-serine (DOPS). Its function is as follows. Catalytic component of a P4-ATPase flippase complex which catalyzes the hydrolysis of ATP coupled to the transport of aminophospholipids from the outer to the inner leaflet of various membranes and ensures the maintenance of asymmetric distribution of phospholipids. Able to translocate phosphatidylserine, but not phosphatidylcholine. Phospholipid translocation seems also to be implicated in vesicle formation and in uptake of lipid signaling molecules. Reconstituted to liposomes, the ATP8A2:TMEM30A flippase complex predominantly transports phosphatidylserine (PS) and to a lesser extent phosphatidylethanolamine (PE). Phospholipid translocation is not associated with a countertransport of an inorganic ion or other charged substrate from the cytoplasmic side toward the exoplasm in connection with the phosphorylation from ATP. ATP8A2:TMEM30A may be involved in regulation of neurite outgrowth. Proposed to function in the generation and maintenance of phospholipid asymmetry in photoreceptor disk membranes and neuronal axon membranes. May be involved in vesicle trafficking in neuronal cells. Required for normal visual and auditory function; involved in photoreceptor and inner ear spiral ganglion cell survival. This Bos taurus (Bovine) protein is Phospholipid-transporting ATPase IB.